A 330-amino-acid polypeptide reads, in one-letter code: MNNYFSMEAFDYDDIQLVPNKAIVNSRKECVTSVKFGNRTFKIPVVPANMESVIDEKLAVWLAQNGYYYVMHRFQPEKRADFIKMMHEKGLFASISVGIKDDEYDFIDELVEKDLIPEYTTIDVAHGHSVYVIDMIKYIKEKMPDTFLTAGNVATPEAVRELENAGADATKVGVGPGKACITKLKTGFGTGGWQLAALRMCSKVARKPLIADGGIRHNGDIAKSVRFGASMVMIGSMLAGHEESPGNVIKIDGKTYKQYWGSASEVQKGAYRNVEGKQMLVPYRGSIANTLEEMKEDLQSSISYAGGRDLESIKRVDYVIVKNTIMNGDY.

Cys180 acts as the Thioimidate intermediate in catalysis. Residue 209 to 232 coordinates NADP(+); that stretch reads LIADGGIRHNGDIAKSVRFGASMV.

The protein belongs to the IMPDH/GMPR family. GuaC type 2 subfamily.

The catalysed reaction is IMP + NH4(+) + NADP(+) = GMP + NADPH + 2 H(+). Functionally, catalyzes the irreversible NADPH-dependent deamination of GMP to IMP. It functions in the conversion of nucleobase, nucleoside and nucleotide derivatives of G to A nucleotides, and in maintaining the intracellular balance of A and G nucleotides. This Lactobacillus delbrueckii subsp. bulgaricus (strain ATCC BAA-365 / Lb-18) protein is GMP reductase.